We begin with the raw amino-acid sequence, 459 residues long: Sulfite oxidase (459 aa).

One can recognise a Cytochrome b5 heme-binding domain in the interval 4 to 83; the sequence is YPRYTREEVG…LQQYKVGELS (80 aa). Heme b-binding residues include H40, H65, and H69. The interval 83–115 is disordered; sequence SPDEAPAAPDAQDPFAGDPPRHPGLRVNSQKPF. Residues 85 to 100 are compositionally biased toward low complexity; the sequence is DEAPAAPDAQDPFAGD. The hinge stretch occupies residues 86 to 95; sequence EAPAAPDAQD. A moco domain region spans residues 96–323; sequence PFAGDPPRHP…PSRWQQNDYK (228 aa). Residues 136–140, C185, D244, H283, R288, and 299–301 each bind Mo-molybdopterin; these read FTRNH and SVK. Residues 324-459 form a homodimerization region; that stretch reads GFSPCVDWDT…RGVLSTAWHR (136 aa).

In terms of assembly, homodimer. It depends on heme b as a cofactor. Mo-molybdopterin serves as cofactor.

The protein resides in the mitochondrion intermembrane space. The enzyme catalyses sulfite + O2 + H2O = sulfate + H2O2. Its pathway is energy metabolism; sulfur metabolism. Functionally, catalyzes the oxidation of sulfite to sulfate, the terminal reaction in the oxidative degradation of sulfur-containing amino acids. The polypeptide is Sulfite oxidase (SUOX) (Gallus gallus (Chicken)).